The primary structure comprises 278 residues: Cytoplasmic envelopment protein 1 (278 aa).

It belongs to the herpesviridae cytoplasmic envelopment protein 1 family. As to quaternary structure, interacts with BSRF1 tegument protein; the BBRF2-BSRF1 complexes oligomerize and might play a role in tethering the viral nucleocapsids to the host Golgi membrane during secondary envelopment.

It localises to the virion. The protein localises to the virion tegument. The protein resides in the host cytoplasm. It is found in the host Golgi apparatus. Plays a critical role in cytoplasmic virus egress. Participates in the final step of tegumentation and envelope acquisition within the host cytoplasm. This Homo sapiens (Human) protein is Cytoplasmic envelopment protein 1.